A 373-amino-acid chain; its full sequence is Dual-specificity RNA methyltransferase RlmN (373 aa).

The Proton acceptor role is filled by glutamate 94. Residues 100–339 (EDDRATLCVS…VIVRKTRGDD (240 aa)) form the Radical SAM core domain. An intrachain disulfide couples cysteine 107 to cysteine 344. Residues cysteine 114, cysteine 118, and cysteine 121 each contribute to the [4Fe-4S] cluster site. S-adenosyl-L-methionine contacts are provided by residues 168-169 (GE), serine 200, 222-224 (SIH), and asparagine 301. The active-site S-methylcysteine intermediate is the cysteine 344.

This sequence belongs to the radical SAM superfamily. RlmN family. [4Fe-4S] cluster serves as cofactor.

The protein localises to the cytoplasm. It carries out the reaction adenosine(2503) in 23S rRNA + 2 reduced [2Fe-2S]-[ferredoxin] + 2 S-adenosyl-L-methionine = 2-methyladenosine(2503) in 23S rRNA + 5'-deoxyadenosine + L-methionine + 2 oxidized [2Fe-2S]-[ferredoxin] + S-adenosyl-L-homocysteine. It catalyses the reaction adenosine(37) in tRNA + 2 reduced [2Fe-2S]-[ferredoxin] + 2 S-adenosyl-L-methionine = 2-methyladenosine(37) in tRNA + 5'-deoxyadenosine + L-methionine + 2 oxidized [2Fe-2S]-[ferredoxin] + S-adenosyl-L-homocysteine. In terms of biological role, specifically methylates position 2 of adenine 2503 in 23S rRNA and position 2 of adenine 37 in tRNAs. m2A2503 modification seems to play a crucial role in the proofreading step occurring at the peptidyl transferase center and thus would serve to optimize ribosomal fidelity. The polypeptide is Dual-specificity RNA methyltransferase RlmN (Shewanella sp. (strain ANA-3)).